A 969-amino-acid chain; its full sequence is Defective in germ line development protein 3 (969 aa).

The interval 34 to 81 (MAENAASARKLFVSSALKDIIVNPENFYHDFQQSAQMAEDANQRRQVS) is gld-2-binding. KH domains follow at residues 34–109 (MAEN…MIEI), 113–187 (RVTL…MRRN), 189–259 (HFTV…NEIL), 270–342 (FTLH…IMDL), and 344–419 (PISM…YQKV). The interval 57-471 (PENFYHDFQQ…GSNGRRHRSS (415 aa)) is gls-1-binding. 2 disordered regions span residues 459-508 (LSDG…SFSE) and 602-711 (EQHR…GDIH). Residues 487-508 (KQFSESSGGPSRSHTRVSSFSE) show a composition bias toward polar residues. Residues 631–644 (PSSSTGSYYPSTTP) are compositionally biased toward low complexity. Positions 647 to 659 (RVYEQVREDDLRS) are enriched in basic and acidic residues. Residues 664-676 (RRTSVNGDDQNVE) show a composition bias toward polar residues. Composition is skewed to basic and acidic residues over residues 677–687 (SMHDQGYERQY) and 694–711 (LQKDDQQRWKTGSRGDIH). The gls-1-binding stretch occupies residues 769–969 (LYMHESPHND…DLSLDETSTY (201 aa)). The interval 860-949 (NGVTKTILEP…VLNEKEKEIA (90 aa)) is fbf-1-binding. Positions 950 to 969 (DKSIESTVTQDLSLDETSTY) are disordered. A compositionally biased stretch (polar residues) spans 954–969 (ESTVTQDLSLDETSTY).

In terms of assembly, interacts (via its KH1 domain) with gld-2. Isoform A but not isoform B interacts specifically with fbf-1 and fbf-2 in an RNA-independent manner. Isoform A interacts with gls-1 isoform C. Expressed in the germline (at protein level). In adult hermaphrodites, first detected in the transition zone (TZ), weakly expressed in the early mitotic region and in pachytene germ cells, and becomes more abundantly expressed as germ cells enter diakinesis (at protein level). Expressed in primary spermatocytes, but not in secondary spermatocytes or adult sperm (at protein level).

The protein resides in the cytoplasm. The protein localises to the cytoplasmic granule. It localises to the perinuclear region. Required maternally for germline survival and embryogenesis. Forms a complex with gls-1 which promotes the oogenic cell fate by freeing the translational repressor fbf to repress sperm promoting factors. Promotes maturation of primary spermatocytes to mature sperm. Required during hermaphrodite development to promote sperm fate, which is critical for determining the normal number of sperm. Promotion of sperm fate is at the expense of oogenesis, possibly through the negative regulation of fbf. Required during male development for the continued production of sperm and inhibition of oogenesis. Together with gld-2, promotes the transition from mitosis to meiosis. Required for polyadenylation of neg-1 mRNA during embryogenesis. The sequence is that of Defective in germ line development protein 3 from Caenorhabditis elegans.